Here is a 91-residue protein sequence, read N- to C-terminus: Small ribosomal subunit protein uS19 (91 aa).

The protein belongs to the universal ribosomal protein uS19 family.

Protein S19 forms a complex with S13 that binds strongly to the 16S ribosomal RNA. This Opitutus terrae (strain DSM 11246 / JCM 15787 / PB90-1) protein is Small ribosomal subunit protein uS19.